A 1178-amino-acid chain; its full sequence is Pyruvate carboxylase 1 (1178 aa).

The Biotin carboxylation domain occupies 18-470 (EKNKILVANR…WTTFIDDTPQ (453 aa)). ATP-binding residues include K136, E220, and H255. An ATP-grasp domain is found at 140–337 (RNLAAKANVP…IVAAQIQIAA (198 aa)). Residue R312 is part of the active site. Residues 557 to 824 (TLLMDTTWRD…DTGINVEHVR (268 aa)) enclose the Pyruvate carboxyltransferase domain. Substrate contacts are provided by residues 565–569 (RDAHQ) and R638. D566 contributes to the a divalent metal cation binding site. Residues K734, H764, and H766 each contribute to the a divalent metal cation site. Position 734 is an N6-carboxylysine (K734). A substrate-binding site is contributed by T898. One can recognise a Biotinyl-binding domain in the interval 1094–1169 (KADMHDPLHI…DSSDLLVLLE (76 aa)). K1135 bears the N6-biotinyllysine mark.

As to quaternary structure, homotetramer. Biotin is required as a cofactor. Zn(2+) serves as cofactor.

The protein resides in the cytoplasm. It carries out the reaction hydrogencarbonate + pyruvate + ATP = oxaloacetate + ADP + phosphate + H(+). The protein operates within carbohydrate biosynthesis; gluconeogenesis. In terms of biological role, pyruvate carboxylase catalyzes a 2-step reaction, involving the ATP-dependent carboxylation of the covalently attached biotin in the first step and the transfer of the carboxyl group to pyruvate in the second. The protein is Pyruvate carboxylase 1 (PYC1) of Saccharomyces cerevisiae (strain ATCC 204508 / S288c) (Baker's yeast).